The following is a 259-amino-acid chain: Virulence plasmid ParA family protein pGP5-D (259 aa).

9-16 (FKGGTGKT) is a binding site for ATP.

It belongs to the ParA family.

In Chlamydia psittaci (Chlamydophila psittaci), this protein is Virulence plasmid ParA family protein pGP5-D.